A 196-amino-acid chain; its full sequence is Probable malonic semialdehyde reductase RutE (196 aa).

It belongs to the nitroreductase family. HadB/RutE subfamily. It depends on FMN as a cofactor.

It carries out the reaction 3-hydroxypropanoate + NADP(+) = 3-oxopropanoate + NADPH + H(+). Functionally, may reduce toxic product malonic semialdehyde to 3-hydroxypropionic acid, which is excreted. The polypeptide is Probable malonic semialdehyde reductase RutE (Cronobacter sakazakii (strain ATCC BAA-894) (Enterobacter sakazakii)).